Here is a 329-residue protein sequence, read N- to C-terminus: Quinone oxidoreductase (329 aa).

N-acetylalanine is present on A2. The residue at position 23 (K23) is an N6-acetyllysine. NADP(+)-binding positions include Y53, 158–161, G181, H200, N229, 246–249, and 269–271; these read SGGV, VGSR, and VTL. The residue at position 248 (S248) is a Phosphoserine. The residue at position 296 (K296) is an N6-succinyllysine.

The protein belongs to the zinc-containing alcohol dehydrogenase family. Quinone oxidoreductase subfamily. Homotetramer. In terms of tissue distribution, only very low amounts in the lens.

Its subcellular location is the cytoplasm. It catalyses the reaction 2 a quinone + NADPH + H(+) = 2 a 1,4-benzosemiquinone + NADP(+). Its function is as follows. Does not have alcohol dehydrogenase activity. Binds NADP and acts through a one-electron transfer process. Orthoquinones, such as 1,2-naphthoquinone or 9,10-phenanthrenequinone, are the best substrates (in vitro). May act in the detoxification of xenobiotics. Interacts with (AU)-rich elements (ARE) in the 3'-UTR of target mRNA species. Enhances the stability of mRNA coding for BCL2. NADPH binding interferes with mRNA binding. The sequence is that of Quinone oxidoreductase (CRYZ) from Homo sapiens (Human).